Reading from the N-terminus, the 364-residue chain is Spermidine/putrescine import ATP-binding protein PotA (364 aa).

One can recognise an ABC transporter domain in the interval 5–235 (LSFKSVSKQY…PVNRFVADFI (231 aa)). Residue 37–44 (GPSGCGKT) coordinates ATP.

Belongs to the ABC transporter superfamily. Spermidine/putrescine importer (TC 3.A.1.11.1) family. The complex is composed of two ATP-binding proteins (PotA), two transmembrane proteins (PotB and PotC) and a solute-binding protein (PotD).

Its subcellular location is the cell membrane. It carries out the reaction ATP + H2O + polyamine-[polyamine-binding protein]Side 1 = ADP + phosphate + polyamineSide 2 + [polyamine-binding protein]Side 1.. In terms of biological role, part of the ABC transporter complex PotABCD involved in spermidine/putrescine import. Responsible for energy coupling to the transport system. This chain is Spermidine/putrescine import ATP-binding protein PotA, found in Staphylococcus saprophyticus subsp. saprophyticus (strain ATCC 15305 / DSM 20229 / NCIMB 8711 / NCTC 7292 / S-41).